Consider the following 66-residue polypeptide: Large ribosomal subunit protein bL35 (66 aa).

Belongs to the bacterial ribosomal protein bL35 family.

This chain is Large ribosomal subunit protein bL35, found in Treponema pallidum (strain Nichols).